We begin with the raw amino-acid sequence, 201 residues long: Dephospho-CoA kinase (201 aa).

The 199-residue stretch at Trp3 to Asn201 folds into the DPCK domain. Ala11 to Thr16 is a binding site for ATP.

It belongs to the CoaE family.

It is found in the cytoplasm. It catalyses the reaction 3'-dephospho-CoA + ATP = ADP + CoA + H(+). Its pathway is cofactor biosynthesis; coenzyme A biosynthesis; CoA from (R)-pantothenate: step 5/5. Catalyzes the phosphorylation of the 3'-hydroxyl group of dephosphocoenzyme A to form coenzyme A. This Bdellovibrio bacteriovorus (strain ATCC 15356 / DSM 50701 / NCIMB 9529 / HD100) protein is Dephospho-CoA kinase.